Reading from the N-terminus, the 646-residue chain is Lipoteichoic acid synthase (646 aa).

Residues 1-7 are Cytoplasmic-facing; sequence MSSQKKK. A helical transmembrane segment spans residues 8–28; that stretch reads ISLFAFFLLTVITITLKTYFS. Residues 29–43 are Extracellular-facing; it reads YYVDFSLGVKGLVQN. Residues 44–64 form a helical membrane-spanning segment; sequence LILLMNPYSLVALVLSVFLFF. At 65–68 the chain is on the cytoplasmic side; sequence KGKK. Residues 69–89 form a helical membrane-spanning segment; sequence AFWFMFIGGFLLTFLLYANVV. Residues 90–119 lie on the Extracellular side of the membrane; the sequence is YFRFFSDFLTFSTLNQVGNVESMGGAVSAS. The chain crosses the membrane as a helical span at residues 120–140; that stretch reads FKWYDFVYFIDTLVYLFILIF. The Cytoplasmic portion of the chain corresponds to 141 to 153; sequence KTKWLDTKAFSKK. Residues 154 to 174 traverse the membrane as a helical segment; the sequence is FVPVVMAASVALFFLNLAFAE. The Extracellular portion of the chain corresponds to 175–646; it reads TDRPELLTRT…ETGPKANSKK (472 aa). Mn(2+)-binding residues include glutamate 255 and threonine 300. Threonine 300 is a catalytic residue. A substrate-binding site is contributed by histidine 416. 2 residues coordinate Mn(2+): aspartate 475 and histidine 476. Basic and acidic residues predominate over residues 623–638; that stretch reads NPDFKKVNPSKYKYET. Residues 623–646 are disordered; that stretch reads NPDFKKVNPSKYKYETGPKANSKK.

The protein belongs to the LTA synthase family. Proteolytically cleaved.

The protein resides in the cell membrane. It is found in the secreted. Its pathway is cell wall biogenesis; lipoteichoic acid biosynthesis. Its function is as follows. Catalyzes the polymerization of lipoteichoic acid (LTA) polyglycerol phosphate, a reaction that presumably uses phosphatidylglycerol (PG) as substrate. Is required for staphylococcal growth and cell division process. The chain is Lipoteichoic acid synthase (ltaS) from Staphylococcus aureus (strain USA300).